Consider the following 153-residue polypeptide: Bkd operon transcriptional regulator (153 aa).

The region spanning 4–65 (LDRIDLKILR…RLDEERLSGA (62 aa)) is the HTH asnC-type domain. Residues 23–42 (WRDLAQKVGLSLTPTLRRVR) constitute a DNA-binding region (H-T-H motif).

Its function is as follows. Positive regulator of the bkd operon for branched-chain keto acid dehydrogenase complex. This is Bkd operon transcriptional regulator (bkdR) from Pseudomonas aeruginosa (strain ATCC 15692 / DSM 22644 / CIP 104116 / JCM 14847 / LMG 12228 / 1C / PRS 101 / PAO1).